Consider the following 256-residue polypeptide: Thiazole synthase (256 aa).

K95 acts as the Schiff-base intermediate with DXP in catalysis. Residues G156, 182-183 (AG), and 204-205 (NT) contribute to the 1-deoxy-D-xylulose 5-phosphate site.

Belongs to the ThiG family. As to quaternary structure, homotetramer. Forms heterodimers with either ThiH or ThiS.

It localises to the cytoplasm. The catalysed reaction is [ThiS sulfur-carrier protein]-C-terminal-Gly-aminoethanethioate + 2-iminoacetate + 1-deoxy-D-xylulose 5-phosphate = [ThiS sulfur-carrier protein]-C-terminal Gly-Gly + 2-[(2R,5Z)-2-carboxy-4-methylthiazol-5(2H)-ylidene]ethyl phosphate + 2 H2O + H(+). Its pathway is cofactor biosynthesis; thiamine diphosphate biosynthesis. Catalyzes the rearrangement of 1-deoxy-D-xylulose 5-phosphate (DXP) to produce the thiazole phosphate moiety of thiamine. Sulfur is provided by the thiocarboxylate moiety of the carrier protein ThiS. In vitro, sulfur can be provided by H(2)S. The sequence is that of Thiazole synthase from Escherichia coli O8 (strain IAI1).